The chain runs to 359 residues: Dual-specificity RNA methyltransferase RlmN (359 aa).

The active-site Proton acceptor is the Glu86. Residues 105 to 338 (EGEKYTICVS…CTIRESKGID (234 aa)) form the Radical SAM core domain. A disulfide bond links Cys112 and Cys343. Residues Cys119, Cys123, and Cys126 each coordinate [4Fe-4S] cluster. Residues 169–170 (GE), Ser201, 224–226 (SLH), and Asn300 each bind S-adenosyl-L-methionine. Cys343 (S-methylcysteine intermediate) is an active-site residue.

It belongs to the radical SAM superfamily. RlmN family. Requires [4Fe-4S] cluster as cofactor.

Its subcellular location is the cytoplasm. It carries out the reaction adenosine(2503) in 23S rRNA + 2 reduced [2Fe-2S]-[ferredoxin] + 2 S-adenosyl-L-methionine = 2-methyladenosine(2503) in 23S rRNA + 5'-deoxyadenosine + L-methionine + 2 oxidized [2Fe-2S]-[ferredoxin] + S-adenosyl-L-homocysteine. It catalyses the reaction adenosine(37) in tRNA + 2 reduced [2Fe-2S]-[ferredoxin] + 2 S-adenosyl-L-methionine = 2-methyladenosine(37) in tRNA + 5'-deoxyadenosine + L-methionine + 2 oxidized [2Fe-2S]-[ferredoxin] + S-adenosyl-L-homocysteine. Specifically methylates position 2 of adenine 2503 in 23S rRNA and position 2 of adenine 37 in tRNAs. m2A2503 modification seems to play a crucial role in the proofreading step occurring at the peptidyl transferase center and thus would serve to optimize ribosomal fidelity. This Wolinella succinogenes (strain ATCC 29543 / DSM 1740 / CCUG 13145 / JCM 31913 / LMG 7466 / NCTC 11488 / FDC 602W) (Vibrio succinogenes) protein is Dual-specificity RNA methyltransferase RlmN.